The sequence spans 114 residues: Seed trypsin/chymotrypsin inhibitor TI5-72 (114 aa).

Positions methionine 1–alanine 28 are cleaved as a signal peptide. Residues arginine 29–asparagine 42 constitute a propeptide that is removed on maturation. 7 cysteine pairs are disulfide-bonded: cysteine 50-cysteine 103, cysteine 51-cysteine 66, cysteine 54-cysteine 99, cysteine 56-cysteine 64, cysteine 73-cysteine 80, cysteine 77-cysteine 92, and cysteine 82-cysteine 90.

The protein belongs to the Bowman-Birk serine protease inhibitor family. Seed.

In terms of biological role, inhibitor of trypsin and of chymotrypsin. May function as a natural phytochemical defense against predators. This is Seed trypsin/chymotrypsin inhibitor TI5-72 (TI572) from Pisum sativum (Garden pea).